We begin with the raw amino-acid sequence, 240 residues long: Uridylate cyclase (240 aa).

Residues 45-180 (TYLYADMANS…RAPNLAAKLS (136 aa)) enclose the Guanylate cyclase domain. Position 48 (Y48) interacts with a ribonucleoside 5'-triphosphate. 2 residues coordinate Mn(2+): D50 and D94. R95 provides a ligand contact to a ribonucleoside 5'-triphosphate.

Belongs to the adenylyl cyclase class-4/guanylyl cyclase family. Pyrimidine cyclase subfamily. Homodimer. Mn(2+) is required as a cofactor.

It localises to the cytoplasm. It carries out the reaction UTP = 3',5'-cyclic UMP + diphosphate. Functionally, pycsar (pyrimidine cyclase system for antiphage resistance) provides immunity against bacteriophage. The pyrimidine cyclase (PycC) synthesizes cyclic nucleotides in response to infection; these serve as specific second messenger signals. The signals activate the adjacent effector, leading to bacterial cell death and abortive phage infection. A clade B Pycsar system. In terms of biological role, the pyrimidine cyclase gene of a two-gene Pycsar system, weakly generates cyclic UMP (cUMP) from UTP, has little to no activity on ATP, CTP or GTP. Expression of this and adjacent effector RsmPycTM (AC A0A1V0HUU2) probably confers resistance to bacteriophage. The genes are probably only expressed in response to bacteriophage infection. The sequence is that of Uridylate cyclase from Rhodovulum sp. (strain MB263).